We begin with the raw amino-acid sequence, 484 residues long: Transcription factor TGAL4 (484 aa).

The span at 1 to 11 shows a compositional bias: polar residues; it reads MGEASSSSGHP. Disordered stretches follow at residues 1–22, 84–137, and 155–181; these read MGEA…GYGF, ATAA…NASS, and QQEQ…DPKT. Low complexity predominate over residues 123 to 137; that stretch reads SESSSKNNSNQNASS. A compositionally biased stretch (polar residues) spans 163-173; sequence ATNSPTHSSKT. The region spanning 178-222 is the bZIP domain; that stretch reads DPKTMRRLAQNREAARKSRLRKKAYIQQLESSKLKLAQMEQDIHR. Residues 180-200 are basic motif; the sequence is KTMRRLAQNREAARKSRLRKK. Residues 206–220 form a leucine-zipper region; that stretch reads LESSKLKLAQMEQDI. The 215-residue stretch at 241–455 folds into the DOG1 domain; it reads AAMFDVDYAR…RALSSLWASR (215 aa).

The protein belongs to the bZIP family. As to quaternary structure, interacts with NPR1/NH1 and NPR3/NH3.

The protein resides in the nucleus. Transcriptional regulator involved in defense response. The sequence is that of Transcription factor TGAL4 from Oryza sativa subsp. japonica (Rice).